A 261-amino-acid polypeptide reads, in one-letter code: Kallikrein 1-related peptidase b11 (261 aa).

Residues 1 to 18 form the signal peptide; sequence MWFLILFLALSLGGIDAA. Residues 19–24 constitute a propeptide, activation peptide; the sequence is PPVQSR. The 234-residue stretch at 25-258 folds into the Peptidase S1 domain; that stretch reads IVGGFNCEKN…FTNWIKDTMA (234 aa). Disulfide bonds link C31/C173, C50/C66, C152/C219, C184/C198, and C209/C234. The Charge relay system role is filled by H65. N102 is a glycosylation site (N-linked (GlcNAc...) asparagine). Residue D120 is the Charge relay system of the active site. Residue S213 is the Charge relay system of the active site.

Belongs to the peptidase S1 family. Kallikrein subfamily.

The enzyme catalyses Preferential cleavage of Arg-|-Xaa bonds in small molecule substrates. Highly selective action to release kallidin (lysyl-bradykinin) from kininogen involves hydrolysis of Met-|-Xaa or Leu-|-Xaa.. Glandular kallikreins cleave Met-Lys and Arg-Ser bonds in kininogen to release Lys-bradykinin. The protein is Kallikrein 1-related peptidase b11 (Klk1b11) of Mus musculus (Mouse).